Consider the following 102-residue polypeptide: Large ribosomal subunit protein bL21 (102 aa).

It belongs to the bacterial ribosomal protein bL21 family. Part of the 50S ribosomal subunit. Contacts protein L20.

Functionally, this protein binds to 23S rRNA in the presence of protein L20. The polypeptide is Large ribosomal subunit protein bL21 (Campylobacter jejuni subsp. jejuni serotype O:6 (strain 81116 / NCTC 11828)).